The primary structure comprises 372 residues: 4-hydroxy-3-methylbut-2-en-1-yl diphosphate synthase (flavodoxin) (372 aa).

Residues cysteine 270, cysteine 273, cysteine 305, and glutamate 312 each contribute to the [4Fe-4S] cluster site.

It belongs to the IspG family. Requires [4Fe-4S] cluster as cofactor.

The enzyme catalyses (2E)-4-hydroxy-3-methylbut-2-enyl diphosphate + oxidized [flavodoxin] + H2O + 2 H(+) = 2-C-methyl-D-erythritol 2,4-cyclic diphosphate + reduced [flavodoxin]. The protein operates within isoprenoid biosynthesis; isopentenyl diphosphate biosynthesis via DXP pathway; isopentenyl diphosphate from 1-deoxy-D-xylulose 5-phosphate: step 5/6. Functionally, converts 2C-methyl-D-erythritol 2,4-cyclodiphosphate (ME-2,4cPP) into 1-hydroxy-2-methyl-2-(E)-butenyl 4-diphosphate. This Escherichia coli O139:H28 (strain E24377A / ETEC) protein is 4-hydroxy-3-methylbut-2-en-1-yl diphosphate synthase (flavodoxin).